A 2007-amino-acid chain; its full sequence is Structural maintenance of chromosomes flexible hinge domain-containing protein 1 (2007 aa).

Position 2 is an N-acetylalanine (Ala-2). The segment at 111–702 (TKERIDFLPH…LSVTWPEGDE (592 aa)) is ATPase activity domain. Ser-833 bears the Phosphoserine mark. Lys-1350 is subject to N6-acetyllysine. A Glycyl lysine isopeptide (Lys-Gly) (interchain with G-Cter in SUMO2) cross-link involves residue Lys-1375. Phosphothreonine is present on Thr-1500. Residues 1721–1848 (GDILGKIAHL…DNLDAANHYR (128 aa)) enclose the SMC hinge domain. An N6-succinyllysine modification is found at Lys-1803. Ser-1975 carries the post-translational modification Phosphoserine. The interval 1984-2007 (PIPTKRMRRESTRQNRRPKGDVPN) is disordered.

It belongs to the SMC family. Highly divergent. In terms of assembly, homodimer; homodimerizes via its SMC hinge domain. Interacts with LRIF1. Post-translationally, sumoylated with SUMO1. In terms of tissue distribution, during embryogenesis, specifically expressed in immature olfactory sensory neurons.

The protein localises to the chromosome. The catalysed reaction is ATP + H2O = ADP + phosphate + H(+). Functionally, non-canonical member of the structural maintenance of chromosomes (SMC) protein family that plays a key role in epigenetic silencing by regulating chromatin architecture. Promotes heterochromatin formation in both autosomes and chromosome X, probably by mediating the merge of chromatin compartments. Plays a key role in chromosome X inactivation in females by promoting the spreading of heterochromatin. Recruited to inactivated chromosome X by Xist RNA and acts by mediating the merge of chromatin compartments: promotes random chromatin interactions that span the boundaries of existing structures, leading to create a compartment-less architecture typical of inactivated chromosome X. Required to facilitate Xist RNA spreading. Also required for silencing of a subset of clustered autosomal loci in somatic cells, such as the DUX4 locus. Has ATPase activity; may participate in structural manipulation of chromatin in an ATP-dependent manner as part of its role in gene expression regulation. Also plays a role in DNA repair: localizes to sites of DNA double-strand breaks in response to DNA damage to promote the repair of DNA double-strand breaks. Acts by promoting non-homologous end joining (NHEJ) and inhibiting homologous recombination (HR) repair. Required during preimplantation development, probably acts by regulating chromatin architecture. The polypeptide is Structural maintenance of chromosomes flexible hinge domain-containing protein 1 (Mus musculus (Mouse)).